The primary structure comprises 1340 residues: Pleckstrin homology domain-containing family G member 2 (1340 aa).

Residues 34–44 (TPTAQAATTMA) are compositionally biased toward polar residues. Residues 34 to 76 (TPTAQAATTMASPRGSGSSTSLSTVGSEGDPSPACSASRPEPL) are disordered. The span at 45-62 (SPRGSGSSTSLSTVGSEG) shows a compositional bias: low complexity. One can recognise a DH domain in the interval 98–279 (RLERVAREIV…TAVAWYINDM (182 aa)). The region spanning 309–407 (ELVLEGTFRG…WIHCLQRLFF (99 aa)) is the PH domain. Disordered regions lie at residues 431 to 623 (PKSK…IPCI), 684 to 743 (LPGP…SVQG), 820 to 855 (MQRA…EAEP), 907 to 979 (NVSD…PSAG), 991 to 1028 (TTSL…EQRD), 1047 to 1069 (PVCT…STDF), and 1125 to 1146 (PLSS…SLTD). Threonine 441 is modified (phosphothreonine). Serine 446 and serine 465 each carry phosphoserine. The span at 560-572 (DIPKFPRDSRVPV) shows a compositional bias: basic and acidic residues. Positions 588–600 (SEEEEEEDLETDE) are enriched in acidic residues. 5 stretches are compositionally biased toward polar residues: residues 703–714 (SGSNPGRLSESP), 820–831 (MQRAETRASTNA), 907–921 (NVSD…SSNS), 930–945 (GQSN…TSLL), and 956–972 (PTAS…SQVP). Residues 1049–1059 (CTSSPDQQIPA) are compositionally biased toward polar residues. Threonine 1215 bears the Phosphothreonine mark. 2 positions are modified to phosphoserine: serine 1219 and serine 1269. A disordered region spans residues 1250-1340 (RRQGPGGEGT…VGPSQGPGGS (91 aa)). The segment covering 1276–1288 (PSPPPQPQPPAPP) has biased composition (pro residues). Positions 1319–1333 (HPALLAAPHPGAVGP) are enriched in low complexity.

As to expression, expressed in thymus, skeletal muscle, lung, testis, uterus, pancreas and heart and also expressed during embryogenesis.

In terms of biological role, may be a transforming oncogene with exchange activity for CDC42. May be a guanine-nucleotide exchange factor (GEF) for RAC1 and CDC42. Activated by the binding to subunits beta and gamma of the heterotrimeric guanine nucleotide-binding protein (G protein). Involved in the regulation of actin polymerization. The protein is Pleckstrin homology domain-containing family G member 2 (Plekhg2) of Mus musculus (Mouse).